The following is a 342-amino-acid chain: Putative anthocyanidin reductase (342 aa).

NADP(+) contacts are provided by residues Arg44, Lys51, 71–72, 91–93, Tyr172, Lys176, 199–202, and Ser214; these read EL, VAT, and PVLV. Catalysis depends on Lys176, which acts as the Proton donor.

This sequence belongs to the NAD(P)-dependent epimerase/dehydratase family. Dihydroflavonol-4-reductase subfamily. Highly expressed in leaves and weakly in stems. Not expressed in roots.

The protein operates within secondary metabolite biosynthesis; flavonoid biosynthesis. The sequence is that of Putative anthocyanidin reductase from Ginkgo biloba (Ginkgo).